Reading from the N-terminus, the 253-residue chain is 5'/3'-nucleotidase SurE (253 aa).

4 residues coordinate a divalent metal cation: D8, D9, S39, and N92.

Belongs to the SurE nucleotidase family. A divalent metal cation is required as a cofactor.

It is found in the cytoplasm. It carries out the reaction a ribonucleoside 5'-phosphate + H2O = a ribonucleoside + phosphate. It catalyses the reaction a ribonucleoside 3'-phosphate + H2O = a ribonucleoside + phosphate. The catalysed reaction is [phosphate](n) + H2O = [phosphate](n-1) + phosphate + H(+). Nucleotidase with a broad substrate specificity as it can dephosphorylate various ribo- and deoxyribonucleoside 5'-monophosphates and ribonucleoside 3'-monophosphates with highest affinity to 3'-AMP. Also hydrolyzes polyphosphate (exopolyphosphatase activity) with the preference for short-chain-length substrates (P20-25). Might be involved in the regulation of dNTP and NTP pools, and in the turnover of 3'-mononucleotides produced by numerous intracellular RNases (T1, T2, and F) during the degradation of various RNAs. The protein is 5'/3'-nucleotidase SurE of Serratia proteamaculans (strain 568).